Reading from the N-terminus, the 407-residue chain is RING-H2 finger protein ATL43 (407 aa).

The signal sequence occupies residues 1–22; it reads MSSSSLILLFSTLSLFLNVSLA. A helical transmembrane segment spans residues 57-77; the sequence is GIAVVIAVLTAFFSLTFLLLL. An RING-type; atypical zinc finger spans residues 146–188; that stretch reads CAVCLARFEPTEVLRLLPKCKHAFHVECVDTWLDAHSTCPLCR.

The protein belongs to the RING-type zinc finger family. ATL subfamily.

The protein localises to the membrane. The enzyme catalyses S-ubiquitinyl-[E2 ubiquitin-conjugating enzyme]-L-cysteine + [acceptor protein]-L-lysine = [E2 ubiquitin-conjugating enzyme]-L-cysteine + N(6)-ubiquitinyl-[acceptor protein]-L-lysine.. Its pathway is protein modification; protein ubiquitination. The chain is RING-H2 finger protein ATL43 (ATL43) from Arabidopsis thaliana (Mouse-ear cress).